The primary structure comprises 149 residues: Nucleoside diphosphate kinase (149 aa).

ATP contacts are provided by Lys-9, Phe-57, Arg-85, Thr-91, Arg-102, and Asn-112. Residue His-115 is the Pros-phosphohistidine intermediate of the active site.

It belongs to the NDK family. Homotetramer. The cofactor is Mg(2+).

The protein localises to the cytoplasm. It carries out the reaction a 2'-deoxyribonucleoside 5'-diphosphate + ATP = a 2'-deoxyribonucleoside 5'-triphosphate + ADP. It catalyses the reaction a ribonucleoside 5'-diphosphate + ATP = a ribonucleoside 5'-triphosphate + ADP. Functionally, major role in the synthesis of nucleoside triphosphates other than ATP. The ATP gamma phosphate is transferred to the NDP beta phosphate via a ping-pong mechanism, using a phosphorylated active-site intermediate. The chain is Nucleoside diphosphate kinase from Carboxydothermus hydrogenoformans (strain ATCC BAA-161 / DSM 6008 / Z-2901).